The sequence spans 491 residues: ADP-specific phosphofructokinase (491 aa).

The region spanning 4-486 (EEWEQRHAEA…FVAMLAKIKQ (483 aa)) is the ADPK domain. Mg(2+) contacts are provided by glutamate 281, glutamate 312, and aspartate 470. Residue aspartate 470 is the Proton acceptor of the active site.

The protein belongs to the carbohydrate kinase PfkC family. The cofactor is Mg(2+).

It is found in the cytoplasm. The enzyme catalyses beta-D-fructose 6-phosphate + ADP = beta-D-fructose 1,6-bisphosphate + AMP + H(+). It participates in carbohydrate degradation; glycolysis. Functionally, catalyzes the phosphorylation of fructose 6-phosphate to fructose 1,6-bisphosphate using ADP as the phosphate donor. In Methanosarcina acetivorans (strain ATCC 35395 / DSM 2834 / JCM 12185 / C2A), this protein is ADP-specific phosphofructokinase.